Reading from the N-terminus, the 31-residue chain is Photosystem II reaction center protein T (31 aa).

A helical transmembrane segment spans residues 3-23 (SFAYILILGLAIATLFFAIAF).

The protein belongs to the PsbT family. As to quaternary structure, PSII is composed of 1 copy each of membrane proteins PsbA, PsbB, PsbC, PsbD, PsbE, PsbF, PsbH, PsbI, PsbJ, PsbK, PsbL, PsbM, PsbT, PsbX, PsbY, PsbZ, Psb30/Ycf12, peripheral proteins PsbO, CyanoQ (PsbQ), PsbU, PsbV and a large number of cofactors. It forms dimeric complexes.

It localises to the cellular thylakoid membrane. Functionally, found at the monomer-monomer interface of the photosystem II (PS II) dimer, plays a role in assembly and dimerization of PSII. PSII is a light-driven water plastoquinone oxidoreductase, using light energy to abstract electrons from H(2)O, generating a proton gradient subsequently used for ATP formation. The protein is Photosystem II reaction center protein T of Synechococcus sp. (strain CC9311).